Here is a 331-residue protein sequence, read N- to C-terminus: Holliday junction branch migration complex subunit RuvB (331 aa).

Residues 4–182 (KDILQSSECI…FGIPMHLEFY (179 aa)) are large ATPase domain (RuvB-L). Residues Arg22, Gly63, Lys66, Thr67, Thr68, 129 to 131 (EDF), Arg172, Tyr182, and Arg219 each bind ATP. Thr67 is a binding site for Mg(2+). The segment at 183-253 (STEELTKVIK…FADQALLRLG (71 aa)) is small ATPAse domain (RuvB-S). Residues 256–331 (KLGLDRQDIK…SYLNEQTYNM (76 aa)) form a head domain (RuvB-H) region. The DNA site is built by Arg309 and Arg314.

It belongs to the RuvB family. In terms of assembly, homohexamer. Forms an RuvA(8)-RuvB(12)-Holliday junction (HJ) complex. HJ DNA is sandwiched between 2 RuvA tetramers; dsDNA enters through RuvA and exits via RuvB. An RuvB hexamer assembles on each DNA strand where it exits the tetramer. Each RuvB hexamer is contacted by two RuvA subunits (via domain III) on 2 adjacent RuvB subunits; this complex drives branch migration. In the full resolvosome a probable DNA-RuvA(4)-RuvB(12)-RuvC(2) complex forms which resolves the HJ.

The protein resides in the cytoplasm. The enzyme catalyses ATP + H2O = ADP + phosphate + H(+). Its function is as follows. The RuvA-RuvB-RuvC complex processes Holliday junction (HJ) DNA during genetic recombination and DNA repair, while the RuvA-RuvB complex plays an important role in the rescue of blocked DNA replication forks via replication fork reversal (RFR). RuvA specifically binds to HJ cruciform DNA, conferring on it an open structure. The RuvB hexamer acts as an ATP-dependent pump, pulling dsDNA into and through the RuvAB complex. RuvB forms 2 homohexamers on either side of HJ DNA bound by 1 or 2 RuvA tetramers; 4 subunits per hexamer contact DNA at a time. Coordinated motions by a converter formed by DNA-disengaged RuvB subunits stimulates ATP hydrolysis and nucleotide exchange. Immobilization of the converter enables RuvB to convert the ATP-contained energy into a lever motion, pulling 2 nucleotides of DNA out of the RuvA tetramer per ATP hydrolyzed, thus driving DNA branch migration. The RuvB motors rotate together with the DNA substrate, which together with the progressing nucleotide cycle form the mechanistic basis for DNA recombination by continuous HJ branch migration. Branch migration allows RuvC to scan DNA until it finds its consensus sequence, where it cleaves and resolves cruciform DNA. This Ehrlichia ruminantium (strain Gardel) protein is Holliday junction branch migration complex subunit RuvB.